The sequence spans 611 residues: Aspartate--tRNA ligase, mitochondrial (611 aa).

Residues 1–30 (MVLSRLPACLLPLVGTKVSIQGWLVATSRQ) constitute a mitochondrion transit peptide. Residue Glu-192 participates in L-aspartate binding. Residues 216-219 (QQYK) are aspartate. Residue Arg-238 coordinates L-aspartate. ATP is bound by residues 238-240 (RDE) and Glu-502. Arg-509 contacts L-aspartate. ATP is bound at residue 554–557 (GFDR).

The protein belongs to the class-II aminoacyl-tRNA synthetase family. Type 1 subfamily.

The protein localises to the mitochondrion. The catalysed reaction is tRNA(Asp) + L-aspartate + ATP = L-aspartyl-tRNA(Asp) + AMP + diphosphate. This chain is Aspartate--tRNA ligase, mitochondrial (msd1), found in Schizosaccharomyces pombe (strain 972 / ATCC 24843) (Fission yeast).